We begin with the raw amino-acid sequence, 453 residues long: Bifunctional protein GlmU (453 aa).

The interval Met1–Arg226 is pyrophosphorylase. UDP-N-acetyl-alpha-D-glucosamine-binding positions include Leu8–Gly11, Lys22, Gln73, Gly78–Thr79, Tyr100–Asp102, Gly137, Glu151, Asn166, and Asn224. Asp102 lines the Mg(2+) pocket. Asn224 provides a ligand contact to Mg(2+). Residues Ala227–Gln247 form a linker region. The N-acetyltransferase stretch occupies residues Gly248–Lys453. The UDP-N-acetyl-alpha-D-glucosamine site is built by Arg330 and Lys348. Catalysis depends on His360, which acts as the Proton acceptor. 2 residues coordinate UDP-N-acetyl-alpha-D-glucosamine: Tyr363 and Asn374. Residues Ala377, Asn383 to Tyr384, Ser402, Ala420, and Arg437 each bind acetyl-CoA.

This sequence in the N-terminal section; belongs to the N-acetylglucosamine-1-phosphate uridyltransferase family. The protein in the C-terminal section; belongs to the transferase hexapeptide repeat family. In terms of assembly, homotrimer. The cofactor is Mg(2+).

The protein resides in the cytoplasm. It catalyses the reaction alpha-D-glucosamine 1-phosphate + acetyl-CoA = N-acetyl-alpha-D-glucosamine 1-phosphate + CoA + H(+). The enzyme catalyses N-acetyl-alpha-D-glucosamine 1-phosphate + UTP + H(+) = UDP-N-acetyl-alpha-D-glucosamine + diphosphate. It participates in nucleotide-sugar biosynthesis; UDP-N-acetyl-alpha-D-glucosamine biosynthesis; N-acetyl-alpha-D-glucosamine 1-phosphate from alpha-D-glucosamine 6-phosphate (route II): step 2/2. The protein operates within nucleotide-sugar biosynthesis; UDP-N-acetyl-alpha-D-glucosamine biosynthesis; UDP-N-acetyl-alpha-D-glucosamine from N-acetyl-alpha-D-glucosamine 1-phosphate: step 1/1. Its pathway is bacterial outer membrane biogenesis; LPS lipid A biosynthesis. Catalyzes the last two sequential reactions in the de novo biosynthetic pathway for UDP-N-acetylglucosamine (UDP-GlcNAc). The C-terminal domain catalyzes the transfer of acetyl group from acetyl coenzyme A to glucosamine-1-phosphate (GlcN-1-P) to produce N-acetylglucosamine-1-phosphate (GlcNAc-1-P), which is converted into UDP-GlcNAc by the transfer of uridine 5-monophosphate (from uridine 5-triphosphate), a reaction catalyzed by the N-terminal domain. This Vibrio vulnificus (strain YJ016) protein is Bifunctional protein GlmU.